The following is a 452-amino-acid chain: Pup--protein ligase (452 aa).

Residue glutamate 9 participates in Mg(2+) binding. Arginine 53 is an ATP binding site. Tyrosine 55 contacts Mg(2+). The active-site Proton acceptor is the aspartate 57. A Mg(2+)-binding site is contributed by glutamate 63. Threonine 66 and tryptophan 419 together coordinate ATP.

Belongs to the Pup ligase/Pup deamidase family. Pup-conjugating enzyme subfamily.

The enzyme catalyses ATP + [prokaryotic ubiquitin-like protein]-L-glutamate + [protein]-L-lysine = ADP + phosphate + N(6)-([prokaryotic ubiquitin-like protein]-gamma-L-glutamyl)-[protein]-L-lysine.. Its pathway is protein degradation; proteasomal Pup-dependent pathway. It functions in the pathway protein modification; protein pupylation. Functionally, catalyzes the covalent attachment of the prokaryotic ubiquitin-like protein modifier Pup to the proteasomal substrate proteins, thereby targeting them for proteasomal degradation. This tagging system is termed pupylation. The ligation reaction involves the side-chain carboxylate of the C-terminal glutamate of Pup and the side-chain amino group of a substrate lysine. This chain is Pup--protein ligase, found in Mycobacterium tuberculosis (strain KZN 1435 / MDR).